Consider the following 179-residue polypeptide: Auxin-induced protein IAA6 (179 aa).

Residues 13-17 carry the EAR-like (transcriptional repression) motif; that stretch reads LRLGL. The segment at 31–52 is disordered; it reads FSEIDGGVEENGGSGDRKSVDK. The PB1 domain occupies 75-163; that stretch reads KMYMKVSMDG…KRLRIMKRSD (89 aa).

The protein belongs to the Aux/IAA family. As to quaternary structure, homodimers and heterodimers.

Its subcellular location is the nucleus. In terms of biological role, aux/IAA proteins are short-lived transcriptional factors that function as repressors of early auxin response genes at low auxin concentrations. Repression is thought to result from the interaction with auxin response factors (ARFs), proteins that bind to the auxin-responsive promoter element (AuxRE). Formation of heterodimers with ARF proteins may alter their ability to modulate early auxin response genes expression. This Pisum sativum (Garden pea) protein is Auxin-induced protein IAA6 (IAA6).